Consider the following 436-residue polypeptide: GTPase Der (436 aa).

2 consecutive EngA-type G domains span residues 4–167 (PVVA…PEVE) and 174–350 (VRVA…EQRT). Residues 10 to 17 (GRPNVGKS), 57 to 61 (DTGGL), 120 to 123 (NKVD), 180 to 187 (GRPNVGKS), 227 to 231 (DTAGL), and 292 to 295 (NKWD) contribute to the GTP site. Residues 351–435 (RRISTSEVND…PLRIILRRKN (85 aa)) form the KH-like domain.

Belongs to the TRAFAC class TrmE-Era-EngA-EngB-Septin-like GTPase superfamily. EngA (Der) GTPase family. As to quaternary structure, associates with the 50S ribosomal subunit.

Functionally, GTPase that plays an essential role in the late steps of ribosome biogenesis. The protein is GTPase Der of Gemmatimonas aurantiaca (strain DSM 14586 / JCM 11422 / NBRC 100505 / T-27).